The following is a 94-amino-acid chain: Large ribosomal subunit protein bL25 (94 aa).

The protein belongs to the bacterial ribosomal protein bL25 family. Part of the 50S ribosomal subunit; part of the 5S rRNA/L5/L18/L25 subcomplex. Contacts the 5S rRNA. Binds to the 5S rRNA independently of L5 and L18.

Its function is as follows. This is one of the proteins that binds to the 5S RNA in the ribosome where it forms part of the central protuberance. The polypeptide is Large ribosomal subunit protein bL25 (Citrobacter koseri (strain ATCC BAA-895 / CDC 4225-83 / SGSC4696)).